The primary structure comprises 281 residues: UPF0162 protein XF_1494 (281 aa).

TPR repeat units follow at residues V193–Q226 and P227–T260.

The protein belongs to the UPF0162 family.

The protein is UPF0162 protein XF_1494 of Xylella fastidiosa (strain 9a5c).